A 444-amino-acid chain; its full sequence is C4-dicarboxylate transport protein (444 aa).

The next 8 helical transmembrane spans lie at 7–29 (LYKSLYFQVIVAIAIGILLGHFY), 44–66 (IKLIKMVIAPIIFCTVVSGIAGM), 79–101 (ALLYFEIVSTIALLIGLVVVNVV), 143–165 (IVGAFANGDILQVLMFSVIFGFA), 186–208 (VMFNIINMIMKLAPIGALGAMAF), 221–243 (LGQLMICFYITCVLFVLVVLGAI), 291–313 (VVGLVIPTGYSFNLDGTSIYLTM), and 353–375 (FIVLAATLSAVGHLPVAGLALIL). Positions 418–444 (SGGRAISDTREEDDLGVAEGPTPTTVK) are disordered.

The protein belongs to the dicarboxylate/amino acid:cation symporter (DAACS) (TC 2.A.23) family.

Its subcellular location is the cell inner membrane. Its function is as follows. Responsible for the transport of dicarboxylates such as succinate, fumarate, and malate from the periplasm across the inner membrane. In Pseudomonas chlororaphis (Pseudomonas aureofaciens), this protein is C4-dicarboxylate transport protein.